A 1076-amino-acid chain; its full sequence is Vacuolar membrane protease (1076 aa).

The Cytoplasmic segment spans residues 1-11 (MKCYNPSAFVP). The chain crosses the membrane as a helical span at residues 12-32 (MAVTLVTVVIYLGVFIPLLII). The Vacuolar portion of the chain corresponds to 33-437 (HETVPSAPDD…TVFAVFRLRT (405 aa)). 3 N-linked (GlcNAc...) asparagine glycosylation sites follow: N50, N99, and N156. 2 residues coordinate Zn(2+): H220 and D232. E266 acts as the Proton acceptor in catalysis. Zn(2+) contacts are provided by E267, E292, and H364. Residues 438–458 (LFAWSLTLLIASPLILFAVSY) traverse the membrane as a helical segment. The Cytoplasmic portion of the chain corresponds to 459 to 491 (LLNRQEKFYFFAGSIKSKNPEDEPISLGGWRGA). Residues 492-512 (FRFPITLFITSAITFACASLI) traverse the membrane as a helical segment. The Vacuolar portion of the chain corresponds to 513–525 (NKINPMIIYSSPY). Residues 526–546 (AVWSMSATLFFSVFWFIMAGC) traverse the membrane as a helical segment. Over 547–556 (NFVRPSALQR) the chain is Cytoplasmic. Residues 557-577 (GYAFMWMFVFGWILLVVATVY) traverse the membrane as a helical segment. Residues 578 to 584 (EDRFKIS) lie on the Vacuolar side of the membrane. Residues 585–605 (GGYLFVFYEAAIFLATLIAIC) form a helical membrane-spanning segment. The Cytoplasmic portion of the chain corresponds to 606–738 (EQFALPRKST…LPIWTWLVQY (133 aa)). Disordered stretches follow at residues 619–662 (DSQN…EETV) and 701–720 (SYDG…HPYG). The span at 621 to 632 (QNDHSDNQDHHH) shows a compositional bias: basic and acidic residues. A compositionally biased stretch (acidic residues) spans 647–660 (PNADDEAAEEDQEE). The helical transmembrane segment at 739–759 (LLVGPFILVILGQVGLFLVAA) threads the bilayer. At 760–771 (LHQTGTDGSPLF) the chain is on the vacuolar side. Residues 772 to 792 (LPYLIVAIFSILLLLPVTPFI) traverse the membrane as a helical segment. The Cytoplasmic segment spans residues 793 to 799 (HRLTHHM). The chain crosses the membrane as a helical span at residues 800–820 (PTFFFLVFIGTLIYNLVAFPF). Residues 821 to 1076 (SPNNRYKAYF…LGLAFLLAYV (256 aa)) lie on the Vacuolar side of the membrane. The N-linked (GlcNAc...) asparagine glycan is linked to N912.

This sequence belongs to the peptidase M28 family. Zn(2+) serves as cofactor.

The protein localises to the vacuole membrane. May be involved in vacuolar sorting and osmoregulation. The protein is Vacuolar membrane protease of Sclerotinia sclerotiorum (strain ATCC 18683 / 1980 / Ss-1) (White mold).